An 86-amino-acid polypeptide reads, in one-letter code: Probable protein BRICK1 (86 aa).

A coiled-coil region spans residues 47–81; it reads EATTKSKLASLNEKLDILERKLEVLEVQVSSATTN.

This sequence belongs to the BRK1 family. Binds SCAR.

It localises to the cytoplasm. The protein resides in the cytoskeleton. Its function is as follows. Involved in regulation of actin and microtubule organization. Part of a WAVE complex that activates the Arp2/3 complex. The polypeptide is Probable protein BRICK1 (Oryza sativa subsp. japonica (Rice)).